The sequence spans 1201 residues: ATPase with bromodomain protein abo2 (1201 aa).

2 disordered regions span residues 1 to 223 (MRRR…MRGP) and 305 to 324 (CDSD…TSDV). Positions 13-24 (DDNEDNEEDDDY) are enriched in acidic residues. Over residues 29–38 (HSEKSEDHSN) the composition is skewed to basic and acidic residues. Polar residues predominate over residues 66–89 (FSSLQKHLNTETPSFSVSIENPSK). The span at 129–146 (TDNNEDESTTFKDEEDDL) shows a compositional bias: acidic residues. Over residues 212–221 (RRGRRKRKMR) the composition is skewed to basic residues. Positions 312-323 (ELSSTSSEQTSD) are enriched in low complexity. Residue 413–420 (GPPGTGKT) coordinates ATP. Residues 897 to 1026 (KIKNKIQVKL…AHAELNVDEL (130 aa)) enclose the Bromo domain.

The protein belongs to the AAA ATPase family.

The protein resides in the nucleus. The enzyme catalyses ATP + H2O = ADP + phosphate + H(+). In terms of biological role, probable ATPase which may play a role in nucleosome organization. The polypeptide is ATPase with bromodomain protein abo2 (Schizosaccharomyces pombe (strain 972 / ATCC 24843) (Fission yeast)).